We begin with the raw amino-acid sequence, 225 residues long: Gene 31 protein (225 aa).

Belongs to the herpesviridae UL92 family.

This Connochaetes taurinus (Blue wildebeest) protein is Gene 31 protein (31).